Reading from the N-terminus, the 454-residue chain is Chromosomal replication initiator protein DnaA (454 aa).

A domain I, interacts with DnaA modulators region spans residues 1 to 79 (MSLCLWKQCL…NSPLIKFEIY (79 aa)). A domain II region spans residues 79–117 (YQIYKENKLKKNIENNNNNKNEKLIWSNIPKFKNLSYRS). Residues 118–334 (NINKRYNFQN…GALNRVILNS (217 aa)) form a domain III, AAA+ region region. ATP contacts are provided by Gly-162, Gly-164, Lys-165, and Thr-166. Positions 335-454 (RFTHRAITVD…FLNLIRTLSK (120 aa)) are domain IV, binds dsDNA.

Belongs to the DnaA family. In terms of assembly, oligomerizes as a right-handed, spiral filament on DNA at oriC.

The protein resides in the cytoplasm. In terms of biological role, plays an essential role in the initiation and regulation of chromosomal replication. ATP-DnaA binds to the origin of replication (oriC) to initiate formation of the DNA replication initiation complex once per cell cycle. Binds the DnaA box (a 9 base pair repeat at the origin) and separates the double-stranded (ds)DNA. Forms a right-handed helical filament on oriC DNA; dsDNA binds to the exterior of the filament while single-stranded (ss)DNA is stabiized in the filament's interior. The ATP-DnaA-oriC complex binds and stabilizes one strand of the AT-rich DNA unwinding element (DUE), permitting loading of DNA polymerase. After initiation quickly degrades to an ADP-DnaA complex that is not apt for DNA replication. Binds acidic phospholipids. This is Chromosomal replication initiator protein DnaA from Buchnera aphidicola subsp. Acyrthosiphon pisum (strain 5A).